A 981-amino-acid polypeptide reads, in one-letter code: Ubiquitin carboxyl-terminal hydrolase 15 (981 aa).

Ala2 bears the N-acetylalanine mark. A mediates interaction with SART3 region spans residues 2–223 (AEGGAADLDT…KNEDGTWPRG (222 aa)). The region spanning 7–118 (ADLDTQRSDI…GQEPIARKVV (112 aa)) is the DUSP domain. The interval 216–237 (EDGTWPRGPSTPKSPGASNFST) is disordered. Thr226 bears the Phosphothreonine mark. Residues 226 to 237 (TPKSPGASNFST) are compositionally biased toward polar residues. Phosphoserine occurs at positions 229 and 242. One can recognise a USP domain in the interval 289–933 (CGLSNLGNTC…AAYVLFYQRQ (645 aa)). Cys298 acts as the Nucleophile in catalysis. Thr602 bears the Phosphothreonine mark. The segment at 633-694 (CCEDQNINGN…GGDNDSENGL (62 aa)) is disordered. Acidic residues predominate over residues 656–673 (METDEPDDESSQDQELPS). The active-site Proton acceptor is His891. The disordered stretch occupies residues 952 to 981 (SAATGIPLESDEDSNDNDNDLENENCMHTN). Acidic residues predominate over residues 960–974 (ESDEDSNDNDNDLEN). Ser961 and Ser965 each carry phosphoserine.

Belongs to the peptidase C19 family. A homodimer structure has been reported; however it is unclear whether the protein form a homodimer in vivo. Identified in a complex with the COP9 signalosome complex (CSN). Interacts with SMAD1, SMAD2 and SMAD3; the interaction is direct. Forms a complex with SMURF2 and SMAD7. Interacts with TGFBR1. Interacts with SART3; the interaction is direct. May interact with RNF20 and RNF40. May interact with PRKN. Interacts with INCA1. Post-translationally, phosphorylated. Phosphorylation protects against ubiquitination and subsequent degradation by the proteasome. In terms of processing, ubiquitinated, leading to degradation by the proteasome. In terms of tissue distribution, widely expressed with highest levels in the brain and spleen, and lowest levels in the muscles (at protein level). In the midbrain, strong expression in neurons including the dopaminergic neurons (at protein level). Widely expressed with highest levels in testis, heart and liver.

It is found in the cytoplasm. The protein resides in the nucleus. Its subcellular location is the mitochondrion. The enzyme catalyses Thiol-dependent hydrolysis of ester, thioester, amide, peptide and isopeptide bonds formed by the C-terminal Gly of ubiquitin (a 76-residue protein attached to proteins as an intracellular targeting signal).. Functionally, hydrolase that removes conjugated ubiquitin from target proteins and regulates various pathways such as the TGF-beta receptor signaling, NF-kappa-B and RNF41/NRDP1-PRKN pathways. Acts as a key regulator of TGF-beta receptor signaling pathway, but the precise mechanism is still unclear: according to a report, acts by promoting deubiquitination of monoubiquitinated R-SMADs (SMAD1, SMAD2 and/or SMAD3), thereby alleviating inhibition of R-SMADs and promoting activation of TGF-beta target genes. According to another reports, regulates the TGF-beta receptor signaling pathway by mediating deubiquitination and stabilization of TGFBR1, leading to an enhanced TGF-beta signal. Able to mediate deubiquitination of monoubiquitinated substrates, 'Lys-27'-, 'Lys-48'- and 'Lys-63'-linked polyubiquitin chains. May also regulate gene expression and/or DNA repair through the deubiquitination of histone H2B. Acts as an inhibitor of mitophagy by counteracting the action of parkin (PRKN): hydrolyzes cleavage of 'Lys-48'- and 'Lys-63'-linked polyubiquitin chains attached by parkin on target proteins such as MFN2, thereby reducing parkin's ability to drive mitophagy. Acts as an associated component of COP9 signalosome complex (CSN) and regulates different pathways via this association: regulates NF-kappa-B by mediating deubiquitination of NFKBIA and deubiquitinates substrates bound to VCP. Involved in endosome organization by mediating deubiquitination of SQSTM1: ubiquitinated SQSTM1 forms a molecular bridge that restrains cognate vesicles in the perinuclear region and its deubiquitination releases target vesicles for fast transport into the cell periphery. Acts as a negative regulator of antifungal immunity by mediating 'Lys-27'-linked deubiquitination of CARD9, thereby inactivating CARD9. In Mus musculus (Mouse), this protein is Ubiquitin carboxyl-terminal hydrolase 15 (Usp15).